The primary structure comprises 428 residues: Oxysterol-binding protein 9 (428 aa).

Residues 1-11 show a composition bias toward polar residues; that stretch reads MTEVQSITTSG. Disordered stretches follow at residues 1–32 and 396–428; these read MTEV…STTN and ALIE…KNQK. Over residues 18-32 the composition is skewed to low complexity; it reads SPSSSSSSISSSTTN. Residues 389–422 adopt a coiled-coil conformation; the sequence is EEAKKYKALIEDNQRKQKKEKDEKLKKDEKLKKE.

It belongs to the OSBP family.

This is Oxysterol-binding protein 9 (osbI) from Dictyostelium discoideum (Social amoeba).